A 245-amino-acid polypeptide reads, in one-letter code: Flavin-dependent thymidylate synthase (245 aa).

Residues isoleucine 5–lysine 210 form the ThyX domain. Residues serine 59, arginine 83–arginine 85, and glutamine 91 each bind FAD. DUMP contacts are provided by residues glutamine 80–arginine 83, glutamine 91–arginine 95, and arginine 149. Positions arginine 83–serine 93 match the ThyX motif motif. FAD-binding positions include asparagine 165–arginine 167 and histidine 171. DUMP is bound at residue arginine 176. Arginine 176 (involved in ionization of N3 of dUMP, leading to its activation) is an active-site residue.

This sequence belongs to the thymidylate synthase ThyX family. As to quaternary structure, homotetramer. The cofactor is FAD.

The catalysed reaction is dUMP + (6R)-5,10-methylene-5,6,7,8-tetrahydrofolate + NADPH + H(+) = dTMP + (6S)-5,6,7,8-tetrahydrofolate + NADP(+). Its pathway is pyrimidine metabolism; dTTP biosynthesis. Its function is as follows. Catalyzes the reductive methylation of 2'-deoxyuridine-5'-monophosphate (dUMP) to 2'-deoxythymidine-5'-monophosphate (dTMP) while utilizing 5,10-methylenetetrahydrofolate (mTHF) as the methyl donor, and NADPH and FADH(2) as the reductant. In Thermococcus onnurineus (strain NA1), this protein is Flavin-dependent thymidylate synthase.